The following is a 1145-amino-acid chain: Adenylate cyclase type 3 (1145 aa).

Residues 1–79 (MPRNQGFSDP…FKRQRHETLL (79 aa)) are Cytoplasmic-facing. The next 5 helical transmembrane spans lie at 80–100 (VLVV…AVVF), 105–125 (LAPL…FVLC), 139–159 (VPYL…GLNF), 173–193 (AFFV…IVII), and 226–246 (ILAN…SYYM). Positions 324, 325, and 368 each coordinate Mg(2+). ATP-binding positions include 324–329 (DIVGFT) and 366–368 (LGD). The chain crosses the membrane as a helical span at residues 381-401 (EDHAVCSILMGLAMVEAISYV). Topologically, residues 402-631 (REKTKTGVDM…RYSVEKEKQS (230 aa)) are cytoplasmic. Arg-412 contacts ATP. Lys-465 participates in a covalent cross-link: Glycyl lysine isopeptide (Lys-Gly) (interchain with G-Cter in SUMO3). Positions 504-564 (QNGLNGSAVP…DNPSFPNPRR (61 aa)) are disordered. Low complexity-rich tracts occupy residues 516-526 (APASSKPSSPA) and 535-544 (GSAHASGSTS). Ser-524 is modified (phosphoserine). Ser-579 carries the post-translational modification Phosphoserine. The next 3 membrane-spanning stretches (helical) occupy residues 632–652 (GAAF…EILI), 663–683 (FVVG…AIFP), and 707–727 (WAML…LSCL). Asn-735 carries N-linked (GlcNAc...) asparagine glycosylation. The next 3 membrane-spanning stretches (helical) occupy residues 753 to 773 (YNYV…VSHM), 774 to 794 (VKLT…LYAW), and 834 to 854 (LPLV…MLSF). The Cytoplasmic portion of the chain corresponds to 855 to 1145 (YYFSRHVEKL…TLPHQVVDNP (291 aa)). ATP contacts are provided by residues Lys-976, 1063–1065 (DIW), and 1070–1074 (NVASR). Ser-1077 is subject to Phosphoserine; by CaMK2. Lys-1110 provides a ligand contact to ATP.

It belongs to the adenylyl cyclase class-4/guanylyl cyclase family. Requires Mg(2+) as cofactor. The cofactor is Mn(2+). Post-translationally, N-glycosylated. Rapidly phosphorylated after stimulation by odorants or forskolin. Phosphorylation by CaMK2 at Ser-1077 down-regulates enzyme activity. In terms of processing, sumoylated. Sumoylation is required for targeting of olfactory cilia. In terms of tissue distribution, detected in the acrosomal region of epididymal spermatozoa, the acrosomal region of round spermatids and in elongating spermatids. Detected in cilia in the olfactory epithelium (at protein level). Detected in olfactory epithelium neurons. Detected in brain, testis, late pachytene spermatocytes, round spermatids and elongating spermatids.

It is found in the cell membrane. It localises to the cell projection. The protein resides in the cilium. Its subcellular location is the golgi apparatus. The protein localises to the cytoplasm. The enzyme catalyses ATP = 3',5'-cyclic AMP + diphosphate. With respect to regulation, specifically activated by the G alpha protein GNAL/G(olf) in signaling cascades triggered by odorant receptors. Activated by forskolin. After forskolin treatment, activity is further increased by calcium/calmodulin. In the absence of forskolin, calcium/calmodulin has little effect on enzyme activity. Its function is as follows. Catalyzes the formation of the signaling molecule cAMP in response to G-protein signaling. Participates in signaling cascades triggered by odorant receptors via its function in cAMP biosynthesis: specifically activated by G alpha protein GNAL/G(olf) in olfactory epithelium. Required for the perception of odorants. Required for normal sperm motility and normal male fertility. Plays a role in regulating insulin levels and body fat accumulation in response to a high fat diet. This chain is Adenylate cyclase type 3 (Adcy3), found in Mus musculus (Mouse).